We begin with the raw amino-acid sequence, 473 residues long: Glutamate--tRNA ligase (473 aa).

The 'HIGH' region motif lies at 11 to 21 (PSPTGFLHIGG). A 'KMSKS' region motif is present at residues 240 to 244 (KLSKR). Position 243 (lysine 243) interacts with ATP.

This sequence belongs to the class-I aminoacyl-tRNA synthetase family. Glutamate--tRNA ligase type 1 subfamily. Monomer.

The protein localises to the cytoplasm. It catalyses the reaction tRNA(Glu) + L-glutamate + ATP = L-glutamyl-tRNA(Glu) + AMP + diphosphate. Functionally, catalyzes the attachment of glutamate to tRNA(Glu) in a two-step reaction: glutamate is first activated by ATP to form Glu-AMP and then transferred to the acceptor end of tRNA(Glu). In Rhodopseudomonas palustris (strain BisB5), this protein is Glutamate--tRNA ligase.